Reading from the N-terminus, the 218-residue chain is MRTMNLAGMIDHTFLKPEATEKDIVNLCHEAKQHKFATVCINPAYICTAAKLLHGSGVGVATVIGFPLGATMTEIKVQEIFAAKAHGAREVDIVINIGWAKSGNWEAVAKDITRAVEAAHCCGVTIKVIIETSLLTEEEKQKAAEIVKASGADYIKTSTGFAGGGATVEDVRNLKAWVGQSVKVKASGGIRSRETALQMVEAGADRLGTSSGVQIITV.

D92 serves as the catalytic Proton donor/acceptor. The active-site Schiff-base intermediate with acetaldehyde is K156. Catalysis depends on K185, which acts as the Proton donor/acceptor.

It belongs to the DeoC/FbaB aldolase family. DeoC type 1 subfamily.

The protein resides in the cytoplasm. The enzyme catalyses 2-deoxy-D-ribose 5-phosphate = D-glyceraldehyde 3-phosphate + acetaldehyde. Its pathway is carbohydrate degradation; 2-deoxy-D-ribose 1-phosphate degradation; D-glyceraldehyde 3-phosphate and acetaldehyde from 2-deoxy-alpha-D-ribose 1-phosphate: step 2/2. Functionally, catalyzes a reversible aldol reaction between acetaldehyde and D-glyceraldehyde 3-phosphate to generate 2-deoxy-D-ribose 5-phosphate. This is Deoxyribose-phosphate aldolase from Desulfitobacterium hafniense (strain Y51).